The chain runs to 360 residues: Peptide chain release factor 1 (360 aa).

Q237 is subject to N5-methylglutamine.

Belongs to the prokaryotic/mitochondrial release factor family. Methylated by PrmC. Methylation increases the termination efficiency of RF1.

It localises to the cytoplasm. In terms of biological role, peptide chain release factor 1 directs the termination of translation in response to the peptide chain termination codons UAG and UAA. The sequence is that of Peptide chain release factor 1 from Ectopseudomonas mendocina (strain ymp) (Pseudomonas mendocina).